The chain runs to 126 residues: Tachykinin-3 (126 aa).

An N-terminal signal peptide occupies residues 1-20 (MRSTLLFAVILALSSARSLG). Positions 21-83 (AVCEESQEQV…VGPKESPLPQ (63 aa)) are excised as a propeptide. Met95 is modified (methionine amide). Residues 99–126 (NLQPDTPVDINQENIPSFGTFKYPPSVE) constitute a propeptide that is removed on maturation. Residues 102–126 (PDTPVDINQENIPSFGTFKYPPSVE) are disordered.

This sequence belongs to the tachykinin family.

It is found in the secreted. In terms of biological role, tachykinins are active peptides which excite neurons, evoke behavioral responses, are potent vasodilators and secretagogues, and contract (directly or indirectly) many smooth muscles. Is a critical central regulator of gonadal function. This Bos taurus (Bovine) protein is Tachykinin-3 (TAC3).